The chain runs to 142 residues: Translation initiation factor 2 subunit beta (142 aa).

The protein belongs to the eIF-2-beta/eIF-5 family. Heterotrimer composed of an alpha, a beta and a gamma chain.

Its function is as follows. eIF-2 functions in the early steps of protein synthesis by forming a ternary complex with GTP and initiator tRNA. This chain is Translation initiation factor 2 subunit beta, found in Thermococcus kodakarensis (strain ATCC BAA-918 / JCM 12380 / KOD1) (Pyrococcus kodakaraensis (strain KOD1)).